The following is a 215-amino-acid chain: Probable phosphoglycerate mutase GpmB (215 aa).

Residues 8–15, 21–22, R58, 82–85, 104–105, and 151–152 contribute to the substrate site; these read RHGETQWN, QG, ELDM, RR, and GM. The active-site Tele-phosphohistidine intermediate is the H9. Residue E82 is the Proton donor/acceptor of the active site.

It belongs to the phosphoglycerate mutase family. GpmB subfamily.

The enzyme catalyses (2R)-2-phosphoglycerate = (2R)-3-phosphoglycerate. It functions in the pathway carbohydrate degradation; glycolysis; pyruvate from D-glyceraldehyde 3-phosphate: step 3/5. This is Probable phosphoglycerate mutase GpmB from Cronobacter sakazakii (strain ATCC BAA-894) (Enterobacter sakazakii).